Here is a 474-residue protein sequence, read N- to C-terminus: tRNA-2-methylthio-N(6)-dimethylallyladenosine synthase (474 aa).

The MTTase N-terminal domain maps to 3-120 (KKLLIKTWGC…LPEMIKQSQT (118 aa)). Residues Cys12, Cys49, Cys83, Cys157, Cys161, and Cys164 each contribute to the [4Fe-4S] cluster site. A Radical SAM core domain is found at 143 to 375 (RAEGATAFVS…QQTINAQAMR (233 aa)). Residues 378 to 441 (RLMLATEQRV…ANSLRGELVR (64 aa)) form the TRAM domain.

The protein belongs to the methylthiotransferase family. MiaB subfamily. In terms of assembly, monomer. It depends on [4Fe-4S] cluster as a cofactor.

It localises to the cytoplasm. It carries out the reaction N(6)-dimethylallyladenosine(37) in tRNA + (sulfur carrier)-SH + AH2 + 2 S-adenosyl-L-methionine = 2-methylsulfanyl-N(6)-dimethylallyladenosine(37) in tRNA + (sulfur carrier)-H + 5'-deoxyadenosine + L-methionine + A + S-adenosyl-L-homocysteine + 2 H(+). Its function is as follows. Catalyzes the methylthiolation of N6-(dimethylallyl)adenosine (i(6)A), leading to the formation of 2-methylthio-N6-(dimethylallyl)adenosine (ms(2)i(6)A) at position 37 in tRNAs that read codons beginning with uridine. This Vibrio parahaemolyticus serotype O3:K6 (strain RIMD 2210633) protein is tRNA-2-methylthio-N(6)-dimethylallyladenosine synthase.